A 217-amino-acid polypeptide reads, in one-letter code: Ribosomal RNA small subunit methyltransferase G (217 aa).

S-adenosyl-L-methionine is bound by residues G74, L79, 125-126 (IQ), and R143.

It belongs to the methyltransferase superfamily. RNA methyltransferase RsmG family.

Its subcellular location is the cytoplasm. The catalysed reaction is guanosine(527) in 16S rRNA + S-adenosyl-L-methionine = N(7)-methylguanosine(527) in 16S rRNA + S-adenosyl-L-homocysteine. Its function is as follows. Specifically methylates the N7 position of guanine in position 527 of 16S rRNA. This Syntrophotalea carbinolica (strain DSM 2380 / NBRC 103641 / GraBd1) (Pelobacter carbinolicus) protein is Ribosomal RNA small subunit methyltransferase G.